Reading from the N-terminus, the 375-residue chain is Alcohol dehydrogenase 1 (375 aa).

At Ser2 the chain carries N-acetylserine. Residues Cys47, His68, Cys98, Cys101, Cys104, Cys112, and Cys175 each coordinate Zn(2+). NAD(+) contacts are provided by residues 200–205 (WSGRVG), Asp224, and Lys229. Lys234 bears the N6-succinyllysine mark. NAD(+) is bound at residue 293-295 (VGV). Lys340 carries the N6-succinyllysine modification. Arg370 contributes to the NAD(+) binding site.

It belongs to the zinc-containing alcohol dehydrogenase family. Class-I subfamily. As to quaternary structure, homodimer. Zn(2+) is required as a cofactor.

It localises to the cytoplasm. The catalysed reaction is a primary alcohol + NAD(+) = an aldehyde + NADH + H(+). The enzyme catalyses a secondary alcohol + NAD(+) = a ketone + NADH + H(+). The chain is Alcohol dehydrogenase 1 (ADH1) from Geomys bursarius (Plains pocket gopher).